A 343-amino-acid chain; its full sequence is Fructose-1,6-bisphosphatase class 1 (343 aa).

The Mg(2+) site is built by Glu-99, Asp-121, Leu-123, and Asp-124. Substrate-binding positions include 124–127 (DGSS), Asn-218, Tyr-250, and Lys-283. Residue Glu-289 coordinates Mg(2+).

This sequence belongs to the FBPase class 1 family. In terms of assembly, homotetramer. Mg(2+) serves as cofactor.

Its subcellular location is the cytoplasm. The enzyme catalyses beta-D-fructose 1,6-bisphosphate + H2O = beta-D-fructose 6-phosphate + phosphate. The protein operates within carbohydrate biosynthesis; gluconeogenesis. This is Fructose-1,6-bisphosphatase class 1 from Leptospira biflexa serovar Patoc (strain Patoc 1 / Ames).